Consider the following 220-residue polypeptide: MNGFTPEEMSRGGDAAAAVAAVVAAAAAAASAGNGNAAGGGAEVPGAGAVSASGPPGAAGPGPGQLCCLREDGERCGRAAGNASFSKRIQKSISQKKVKIELDKSARHLYICDYHKNLIQSVRNRRKRKGSDDDGGDSPVQDIDTPEVDLYQLQVNTLRRYKRHFKLPTRPGLNKAQLVEIVGCHFKSIPVNEKDTLTCFIYSVRNDKNKSDLKADSGVH.

The interval 1–129 (MNGFTPEEMS…QSVRNRRKRK (129 aa)) is interaction with NCOR1. The residue at position 5 (T5) is a Phosphothreonine. The Atypical zinc-finger motif lies at 67–115 (CCLREDGERCGRAAGNASFSKRIQKSISQKKVKIELDKSARHLYICDYH). A Glycyl lysine isopeptide (Lys-Gly) (interchain with G-Cter in SUMO2) cross-link involves residue K87. The interval 123–143 (RNRRKRKGSDDDGGDSPVQDI) is disordered. The interval 130-220 (GSDDDGGDSP…SDLKADSGVH (91 aa)) is interaction with SIN3A. S131 and S138 each carry phosphoserine. Phosphothreonine is present on T145. Glycyl lysine isopeptide (Lys-Gly) (interchain with G-Cter in SUMO2) cross-links involve residues K194 and K214.

Belongs to the SAP30 family. Component of the histone deacetylase complex that includes at least SIN3A, HDAC1 and HDAC2. Found in a complex composed of at least SINHCAF, SIN3A, HDAC1, SAP30, RBBP4, OGT and TET1. Interacts with HDAC1. Interacts with SIN3A, SIN3B, HDAC2, RBBP4 and NCOR1. Interacts directly with SAMSN1. Interacts with HCFC1. Interacts with SAP30BP.

Its subcellular location is the nucleus. Functionally, involved in the functional recruitment of the Sin3-histone deacetylase complex (HDAC) to a specific subset of N-CoR corepressor complexes. Capable of transcription repression by N-CoR. Active in deacetylating core histone octamers (when in a complex) but inactive in deacetylating nucleosomal histones. The protein is Histone deacetylase complex subunit SAP30 of Mus musculus (Mouse).